We begin with the raw amino-acid sequence, 282 residues long: Large ribosomal subunit protein uL4c (282 aa).

The transit peptide at methionine 1–serine 49 directs the protein to the chloroplast. The segment at glutamate 106–valine 138 is disordered.

It belongs to the universal ribosomal protein uL4 family. Part of the 50S ribosomal subunit.

The protein resides in the plastid. It localises to the chloroplast. In terms of biological role, this protein binds directly and specifically to 23S rRNA. May play a role in plastid transcriptional regulation. In Arabidopsis thaliana (Mouse-ear cress), this protein is Large ribosomal subunit protein uL4c (RPL4).